The chain runs to 219 residues: MTQDELKKAVGWAALQYVQPGTIVGVGTGSTAAHFIDALGTMKDQIEGAVSSSDASTEKLKSLGITVFDLNDVDSLGIYVDGADEINGHMQMIKGGGAALTREKIIASVAKKFICIADASKQVDILGKFPLPVEVIPMARSAVARQLVKLGGRPEYRQGVITDNGNVILDVHGMEILDPVAMENAINAIPGVVTVGLFANRGADVALIGTAEGVKTIVK.

Substrate contacts are provided by residues 28 to 31, 81 to 84, and 94 to 97; these read TGST, DGAD, and KGGG. Glu103 functions as the Proton acceptor in the catalytic mechanism. Lys121 is a binding site for substrate.

This sequence belongs to the ribose 5-phosphate isomerase family. As to quaternary structure, homodimer.

It carries out the reaction aldehydo-D-ribose 5-phosphate = D-ribulose 5-phosphate. It functions in the pathway carbohydrate degradation; pentose phosphate pathway; D-ribose 5-phosphate from D-ribulose 5-phosphate (non-oxidative stage): step 1/1. Functionally, catalyzes the reversible conversion of ribose-5-phosphate to ribulose 5-phosphate. The chain is Ribose-5-phosphate isomerase A from Escherichia fergusonii (strain ATCC 35469 / DSM 13698 / CCUG 18766 / IAM 14443 / JCM 21226 / LMG 7866 / NBRC 102419 / NCTC 12128 / CDC 0568-73).